A 478-amino-acid polypeptide reads, in one-letter code: Protein nucleotidyltransferase YdiU (478 aa).

Residues Gly84, Gly86, Arg87, Lys107, Asp119, Gly120, Arg170, and Arg177 each coordinate ATP. Asp246 functions as the Proton acceptor in the catalytic mechanism. The Mg(2+) site is built by Asn247 and Asp256. Asp256 is a binding site for ATP.

This sequence belongs to the SELO family. Mg(2+) is required as a cofactor. Requires Mn(2+) as cofactor.

The catalysed reaction is L-seryl-[protein] + ATP = 3-O-(5'-adenylyl)-L-seryl-[protein] + diphosphate. The enzyme catalyses L-threonyl-[protein] + ATP = 3-O-(5'-adenylyl)-L-threonyl-[protein] + diphosphate. It carries out the reaction L-tyrosyl-[protein] + ATP = O-(5'-adenylyl)-L-tyrosyl-[protein] + diphosphate. It catalyses the reaction L-histidyl-[protein] + UTP = N(tele)-(5'-uridylyl)-L-histidyl-[protein] + diphosphate. The catalysed reaction is L-seryl-[protein] + UTP = O-(5'-uridylyl)-L-seryl-[protein] + diphosphate. The enzyme catalyses L-tyrosyl-[protein] + UTP = O-(5'-uridylyl)-L-tyrosyl-[protein] + diphosphate. In terms of biological role, nucleotidyltransferase involved in the post-translational modification of proteins. It can catalyze the addition of adenosine monophosphate (AMP) or uridine monophosphate (UMP) to a protein, resulting in modifications known as AMPylation and UMPylation. This chain is Protein nucleotidyltransferase YdiU, found in Escherichia coli (strain K12 / MC4100 / BW2952).